A 226-amino-acid polypeptide reads, in one-letter code: Urease accessory protein UreF (226 aa).

This sequence belongs to the UreF family. UreD, UreF and UreG form a complex that acts as a GTP-hydrolysis-dependent molecular chaperone, activating the urease apoprotein by helping to assemble the nickel containing metallocenter of UreC. The UreE protein probably delivers the nickel.

It is found in the cytoplasm. Required for maturation of urease via the functional incorporation of the urease nickel metallocenter. This chain is Urease accessory protein UreF, found in Nitrosospira multiformis (strain ATCC 25196 / NCIMB 11849 / C 71).